Here is a 1809-residue protein sequence, read N- to C-terminus: Pyochelin synthetase PchF (1809 aa).

Positions Phe69 to Pro490 are condensation/cyclization. An adenylation region spans residues Phe520 to Arg915. The region spanning Ala1407–Pro1488 is the Carrier domain. Ser1442 is subject to O-(pantetheine 4'-phosphoryl)serine. A thioesterase region spans residues Leu1584 to Gln1797.

Belongs to the NRP synthetase family. The cofactor is pantetheine 4'-phosphate.

The enzyme catalyses holo-[peptidyl-carrier protein] + L-cysteine + ATP = L-cysteinyl-[peptidyl-carrier protein] + AMP + diphosphate. It functions in the pathway siderophore biosynthesis. Functionally, involved in the biosynthesis of the siderophore pyochelin. Adenylates L-cysteine and loads it onto its peptidyl carrier domain via a thioester linkage to the phosphopanthetheine moiety. Then forms a peptide bond between the salicyl-thiazolinyl intermediate bound to the second carrier domain of PchE and the cysteine bound to its own peptidyl carrier domain to form the salicyl-thiazolinyl-cysteinyl-S-PCP2 intermediate. It subsequently cyclizes the C-terminal cysteine to form the second thiazoline heterocycle in the salicyl-thiazolinyl-thiazolinyl-S-PCP2 intermediate. When this intermediate is released by the action of a thioesterase, it produces the tricyclic acid hydroxyphenyl-thiazolyl-thiazolinyl-carboxylic acid (HPTT-COOH), an advanced intermediate containing the aryl-4,2-bis-heterocyclic skeleton of the bithiazoline class of siderophores. In Pseudomonas aeruginosa (strain UCBPP-PA14), this protein is Pyochelin synthetase PchF.